The primary structure comprises 130 residues: Flagellar assembly factor FliW (130 aa).

This sequence belongs to the FliW family. As to quaternary structure, interacts with translational regulator CsrA and flagellin(s).

The protein resides in the cytoplasm. In terms of biological role, acts as an anti-CsrA protein, binds CsrA and prevents it from repressing translation of its target genes, one of which is flagellin. Binds to flagellin and participates in the assembly of the flagellum. This is Flagellar assembly factor FliW from Borrelia hermsii (strain HS1 / DAH).